The sequence spans 338 residues: Limbic system-associated membrane protein (338 aa).

An N-terminal signal peptide occupies residues 1–28 (MVGRVQPDRKQLPLVLLRLLCLLPTGLP). Ig-like C2-type domains are found at residues 29–122 (VRSV…PKTS), 132–214 (PKIS…VKVT), and 219–304 (PTIT…ASLV). N40 and N66 each carry an N-linked (GlcNAc...) asparagine glycan. The cysteines at positions 53 and 111 are disulfide-linked. Phosphotyrosine is present on Y94. N-linked (GlcNAc...) asparagine glycosylation is found at N136 and N148. 2 disulfide bridges follow: C153-C197 and C239-C290. N-linked (GlcNAc...) asparagine glycans are attached at residues N279, N287, and N300. A lipid anchor (GPI-anchor amidated asparagine; alternate) is attached at N315. A glycan (N-linked (GlcNAc...) asparagine; alternate) is linked at N315. Positions 316 to 338 (GSISLAVPLWLLAASLFCLLSKC) are cleaved as a propeptide — removed in mature form.

It belongs to the immunoglobulin superfamily. IgLON family. In terms of tissue distribution, expressed mostly by neurons comprising limbic-associated cortical and subcortical regions that function in cognition, emotion, memory, and learning.

It localises to the cell membrane. In terms of biological role, mediates selective neuronal growth and axon targeting. Contributes to the guidance of developing axons and remodeling of mature circuits in the limbic system. Essential for normal growth of the hippocampal mossy fiber projection. This Rattus norvegicus (Rat) protein is Limbic system-associated membrane protein (Lsamp).